The primary structure comprises 695 residues: Zinc finger SWIM domain-containing protein 3 (695 aa).

The disordered stretch occupies residues 434–490; the sequence is NAPKLRRTRLPSTPPRPKKPFRICGGGDTRLPVEEVEETKADSAQSQLPQPQDQSSK. Residues 475–489 show a composition bias toward low complexity; it reads DSAQSQLPQPQDQSS. The SWIM-type zinc-finger motif lies at 530 to 571; it reads VAVQLLENSHQVSKDGCSCSCSFQQCYHLPCRHILALLHTSQ.

This chain is Zinc finger SWIM domain-containing protein 3 (Zswim3), found in Mus musculus (Mouse).